A 551-amino-acid chain; its full sequence is HTH-type transcriptional regulator SgrR (551 aa).

Residues 1–116 (MPSARLQQQF…LVSHLGRSFR (116 aa)) form the HTH marR-type domain. Positions 26 to 49 (LNELAALLSCSRRHMRTLLNTMQD) form a DNA-binding region, H-T-H motif. A solute-binding region spans residues 163-492 (ELEADIAHHW…IDWQADAARW (330 aa)).

Its function is as follows. Activates the small RNA gene sgrS under glucose-phosphate stress conditions as well as yfdZ. Represses its own transcription under both stress and non-stress conditions. Might act as a sensor of the intracellular accumulation of phosphoglucose by binding these molecules in its C-terminal solute-binding domain. This Shigella sonnei (strain Ss046) protein is HTH-type transcriptional regulator SgrR.